Here is a 252-residue protein sequence, read N- to C-terminus: Putative endonuclease C1F12.06c (252 aa).

Mg(2+)-binding residues include D43 and D114.

The protein belongs to the endonuclease V family.

It is found in the cytoplasm. It localises to the nucleus. The protein is Putative endonuclease C1F12.06c of Schizosaccharomyces pombe (strain 972 / ATCC 24843) (Fission yeast).